The primary structure comprises 348 residues: Enkurin domain-containing protein 1 (348 aa).

Disordered regions lie at residues 1 to 65 (MCEG…RPGG), 84 to 195 (GGIS…PSAK), and 262 to 282 (AEARQHSQPDPAMPPGHTRMP). Serine 93 is modified (phosphoserine). Residues 95–127 (KRKDPKDHEKENMRRIREIQRRFREQEHSREQG) show a composition bias toward basic and acidic residues. Serine 138 is modified (phosphoserine). A compositionally biased stretch (basic and acidic residues) spans 139 to 148 (PKYDKVESRV). An Enkurin domain is found at 253–345 (ERRDLWRREA…IFSRPKVFVK (93 aa)).

As to quaternary structure, interacts with alpha-tubulin. Interacts (via central region) with CCP110 (via N-terminal region); competes with CEP97 for binding to CCP110.

It localises to the cytoplasm. The protein localises to the cytoskeleton. It is found in the microtubule organizing center. The protein resides in the centrosome. Its subcellular location is the centriole. It localises to the cilium basal body. The protein localises to the cell projection. It is found in the cilium. The protein resides in the spindle. Its subcellular location is the spindle pole. It localises to the cilium axoneme. Its function is as follows. Microtubule-binding protein which regulates microtubule organization and stability. Promotes the stability of astral microtubules and facilitates the proper orientation of the mitotic spindle. This allows the oriented division of basal keratinocytes and contributes to epidermal stratification. Required for the assembly of both primary and motile cilia. Destabilizes the interaction between CCP110 and CEP97 by competing with CEP97 for binding to CCP110 which promotes the removal of CCP110 and CEP97 from the mother centriole and allows the initiation of ciliogenesis. The chain is Enkurin domain-containing protein 1 (ENKD1) from Bos taurus (Bovine).